We begin with the raw amino-acid sequence, 1906 residues long: Serine protease/ABC transporter B family protein tagB (1906 aa).

An N-terminal signal peptide occupies residues 1–31 (MKFQFSSPSKIFLFSSVILILIFIGIKFELL). Positions 96–134 (INNNNNNNNKLNNNNNNNNNNNNNNNNNNNNNNNNNNNN) are disordered. The Peptidase S8 domain occupies 356 to 763 (PTVIFGTKDK…ASSTNPSNAI (408 aa)). Residues aspartate 387 and histidine 432 each act as charge relay system in the active site. Asparagine 594, asparagine 621, and asparagine 672 each carry an N-linked (GlcNAc...) asparagine glycan. Serine 695 acts as the Charge relay system in catalysis. Asparagine 747 and asparagine 823 each carry an N-linked (GlcNAc...) asparagine glycan. The next 3 helical transmembrane spans lie at 1011–1031 (YIII…LMWI), 1076–1096 (FIIE…ASIL), and 1121–1141 (FIII…GSWI). The 284-residue stretch at 1080-1363 (LTIATACSLV…LFGVYVSYIQ (284 aa)) folds into the ABC transmembrane type-1 domain. N-linked (GlcNAc...) asparagine glycosylation occurs at asparagine 1172. The next 3 membrane-spanning stretches (helical) occupy residues 1210-1230 (LVFI…AVPI), 1309-1329 (WLLI…LVIQ), and 1332-1352 (FTVG…DASS). The disordered stretch occupies residues 1385–1455 (LEEEEADRLA…NNNNNIGNLD (71 aa)). Residues 1396–1405 (LSGGGGGGGD) are compositionally biased toward gly residues. Residues 1407–1420 (GDDKKDKQNIENGK) show a composition bias toward basic and acidic residues. Residues 1518-1756 (IEFKNVSFRY…KGKYYRMFSE (239 aa)) enclose the ABC transporter domain. N-linked (GlcNAc...) asparagine glycosylation occurs at asparagine 1522. Residue 1553–1560 (GPSGSGKS) participates in ATP binding. Asparagine 1658 is a glycosylation site (N-linked (GlcNAc...) asparagine). Positions 1757 to 1906 (DKDDTPLQNN…QMDEENDEER (150 aa)) are disordered. Composition is skewed to low complexity over residues 1765–1779 (NNNN…NNNN) and 1814–1871 (EQQE…DYDQ). Over residues 1872–1886 (VPPPPPLPSESPSPP) the composition is skewed to pro residues.

The protein in the C-terminal section; belongs to the ABC transporter superfamily. ABCB family. Multidrug resistance exporter (TC 3.A.1.201) subfamily. This sequence in the N-terminal section; belongs to the peptidase S8 family.

Its subcellular location is the membrane. Intercellular communication via tagB may mediate integration of cellular differentiation with morphogenesis. The chain is Serine protease/ABC transporter B family protein tagB (tagB) from Dictyostelium discoideum (Social amoeba).